The following is a 417-amino-acid chain: Secreted aspartic protease 4 (417 aa).

A signal peptide spans 1–18 (MFLQNILSVLAFALLIDA). A propeptide spans 19–75 (APVKRSTGFVTLDFNVKRSLVDPKDPTVEVKRSPLFLDIEPTEIPVDDTGRNDVGKR) (activation peptide). The Peptidase A1 domain occupies 89-403 (YSADITIGSN…DLDDRKISMA (315 aa)). Asp107 is a catalytic residue. 107-109 (DTG) provides a ligand contact to pepstatin A. Cys122 and Cys134 form a disulfide bridge. Asn137 carries an N-linked (GlcNAc...) asparagine glycan. 160–161 (AD) contributes to the pepstatin A binding site. Asp267 lines the Zn(2+) pocket. Asp293 is an active-site residue. 293–297 (DSGTT) provides a ligand contact to pepstatin A. Cys331 and Cys369 are joined by a disulfide.

It belongs to the peptidase A1 family. Monomer.

It is found in the secreted. The enzyme catalyses Preferential cleavage at the carboxyl of hydrophobic amino acids, but fails to cleave 15-Leu-|-Tyr-16, 16-Tyr-|-Leu-17 and 24-Phe-|-Phe-25 of insulin B chain. Activates trypsinogen, and degrades keratin.. With respect to regulation, activity is inhibited by squash aspartic peptidase inhibitor (SQAPI). Its function is as follows. Secreted aspartic peptidases (SAPs) are a group of ten acidic hydrolases considered as key virulence factors. These enzymes supply the fungus with nutrient amino acids as well as are able to degrade the selected host's proteins involved in the immune defense. Moreover, acts toward human hemoglobin though limited proteolysis to generate a variety of antimicrobial hemocidins, enabling to compete with the other microorganisms of the same physiological niche using the microbicidal peptides generated from the host protein. Functionally, plays a key role in defense against host by cleaving histatin-5 (Hst 5), a peptide from human saliva that carries out fungicidal activity. The cleavage rate decreases in an order of SAP2 &gt; SAP9 &gt; SAP3 &gt; SAP7 &gt; SAP4 &gt; SAP1 &gt; SAP8. The first cleavage occurs between residues 'Lys-17' and 'His-18' of Hst 5, giving DSHAKRHHGYKRKFHEK and HHSHRGY peptides. Simultaneously, the DSHAKRHHGY and KRKFHEKHHSHRGY peptides are also formed. This Candida albicans (strain SC5314 / ATCC MYA-2876) (Yeast) protein is Secreted aspartic protease 4.